A 131-amino-acid chain; its full sequence is MRRTFFKAKIHRATVTHADLEYEGSVSIDEDLLEAAGIWEYEAVHIWNITRGTRLQTYAIKGERGSGIICINGAAAHLNRPGDMVILATFAELEEAEARDFKPTVVLVDRQNKIVAKDAVEVPGPARRVTA.

The Schiff-base intermediate with substrate; via pyruvic acid role is filled by serine 25. Serine 25 carries the post-translational modification Pyruvic acid (Ser). Residue threonine 57 participates in substrate binding. Catalysis depends on tyrosine 58, which acts as the Proton donor. 73–75 (GAA) is a substrate binding site.

This sequence belongs to the PanD family. In terms of assembly, heterooctamer of four alpha and four beta subunits. It depends on pyruvate as a cofactor. Is synthesized initially as an inactive proenzyme, which is activated by self-cleavage at a specific serine bond to produce a beta-subunit with a hydroxyl group at its C-terminus and an alpha-subunit with a pyruvoyl group at its N-terminus.

The protein localises to the cytoplasm. It carries out the reaction L-aspartate + H(+) = beta-alanine + CO2. It functions in the pathway cofactor biosynthesis; (R)-pantothenate biosynthesis; beta-alanine from L-aspartate: step 1/1. Functionally, catalyzes the pyruvoyl-dependent decarboxylation of aspartate to produce beta-alanine. The chain is Aspartate 1-decarboxylase from Anaeromyxobacter sp. (strain K).